The sequence spans 341 residues: Phenylalanine--tRNA ligase alpha subunit (341 aa).

E254 lines the Mg(2+) pocket.

It belongs to the class-II aminoacyl-tRNA synthetase family. Phe-tRNA synthetase alpha subunit type 1 subfamily. As to quaternary structure, tetramer of two alpha and two beta subunits. Mg(2+) is required as a cofactor.

The protein resides in the cytoplasm. The enzyme catalyses tRNA(Phe) + L-phenylalanine + ATP = L-phenylalanyl-tRNA(Phe) + AMP + diphosphate + H(+). The chain is Phenylalanine--tRNA ligase alpha subunit (pheS) from Mycoplasma genitalium (strain ATCC 33530 / DSM 19775 / NCTC 10195 / G37) (Mycoplasmoides genitalium).